The primary structure comprises 440 residues: MVKKNIVVVGTQWGDEGKGKIVDLLTDRVAAVVRFQGGHNAGHTLVIDGKKTVLHLIPSGILREDVECFIGNGVVLAPEALEKEVAQLEDTGLKVKHRLKISDACPLILDYHVALDQARELARGNKAIGTTGRGIGPAYEDKVARRGLRAGDLKNMSQLKQKLQTAMEYHNYMLTNYYKAEPVDFETLWAKCQAYADLIVPMLADIPNLIDLYNKEGKNLMFEGAQGTLLDIDQGTYPYVTSSNTTAGGAASGSGIGPCQLDYVLGITKAYATRVGGGPFPTELRYDVATDEGDAVGKELGTRGREFGATTGRQRRCGWFDAVALRRSAQVNGLTGVCLTKLDVLDELEEIKVCTKYRKDGQDVFLPPSSADEYELVEPHYETLKGWNTSTVGIDSWDALPEEAKVYIRFLEKEMGVTVSILSTGPDRSETLVLEDPFEV.

Residues 14 to 20 and 42 to 44 each bind GTP; these read GDEGKGK and GHT. Residue aspartate 15 is the Proton acceptor of the active site. 2 residues coordinate Mg(2+): aspartate 15 and glycine 42. IMP is bound by residues 15–18, 40–43, threonine 131, arginine 145, glutamine 226, threonine 241, and arginine 313; these read DEGK and NAGH. The Proton donor role is filled by histidine 43. Residue 309–315 participates in substrate binding; the sequence is ATTGRQR. GTP is bound by residues arginine 315, 341-343, and 423-425; these read KLD and STG.

Belongs to the adenylosuccinate synthetase family. Homodimer. It depends on Mg(2+) as a cofactor.

Its subcellular location is the cytoplasm. It carries out the reaction IMP + L-aspartate + GTP = N(6)-(1,2-dicarboxyethyl)-AMP + GDP + phosphate + 2 H(+). It participates in purine metabolism; AMP biosynthesis via de novo pathway; AMP from IMP: step 1/2. Its function is as follows. Plays an important role in the de novo pathway of purine nucleotide biosynthesis. Catalyzes the first committed step in the biosynthesis of AMP from IMP. The polypeptide is Adenylosuccinate synthetase (Hydrogenovibrio crunogenus (strain DSM 25203 / XCL-2) (Thiomicrospira crunogena)).